Consider the following 203-residue polypeptide: MIAAADVKALRERTGAGMMDCKKALTEANGDMEKAIEYLRKKGLATAAKRAGKVASEGLVHAYIHGGGRIGVLIEVNCETDFVAKTEDFRDLVHNLAMQVAASRPEYVAREDVPEEVLAKEKEILRAQALNEGKPEKVVEKIIAGRLEKFYQENCLLEQPFIKDMDRTVQDLINEKIAKLGEKIVVRRFVRYEVGEGIVQSEE.

The interval 80 to 83 (TDFV) is involved in Mg(2+) ion dislocation from EF-Tu.

The protein belongs to the EF-Ts family.

It is found in the cytoplasm. Its function is as follows. Associates with the EF-Tu.GDP complex and induces the exchange of GDP to GTP. It remains bound to the aminoacyl-tRNA.EF-Tu.GTP complex up to the GTP hydrolysis stage on the ribosome. The sequence is that of Elongation factor Ts from Moorella thermoacetica (strain ATCC 39073 / JCM 9320).